The sequence spans 221 residues: Sigma non-opioid intracellular receptor 1 (221 aa).

Residues 1-4 are Lumenal-facing; the sequence is MALW. The chain crosses the membrane as a helical span at residues 5–27; it reads RGLRAVLAVAGLAVAVQLLRGWL. The Cytoplasmic segment spans residues 28 to 221; that stretch reads GSKSYVFNRE…STHLSELGFF (194 aa). An important for ligand-binding region spans residues 96–103; sequence SLTEYVLL. Positions 174–221 are C-terminal hydrophobic region; the sequence is FIPSTLGFALADTIFSTQDFLTLFYTVKVYGKALLLETSTHLSELGFF.

It belongs to the ERG2 family. As to quaternary structure, homotrimer.

The protein resides in the nucleus inner membrane. Its subcellular location is the nucleus outer membrane. It is found in the nucleus envelope. It localises to the cytoplasmic vesicle. The protein localises to the endoplasmic reticulum membrane. The protein resides in the membrane. May function in lipid transport from the endoplasmic reticulum and be involved in a wide array of cellular functions probably through regulation of the biogenesis of lipid microdomains at the plasma membrane. May regulate calcium efflux at the endoplasmic reticulum. This Xenopus tropicalis (Western clawed frog) protein is Sigma non-opioid intracellular receptor 1 (sigmar1).